We begin with the raw amino-acid sequence, 212 residues long: Protein RER1C (212 aa).

Met-1 is modified (N-acetylmethionine). Transmembrane regions (helical) follow at residues 55–75 (TVPHVLYRWIACLCVVLIYIV), 82–102 (GFYIITYAIGIYLLNLIIAFL), 135–155 (EFKFWLSIIRAFIIGFMMTFF), and 157–177 (VFDVPVFWPILLFYWVMLFFL).

This sequence belongs to the RER1 family.

The protein resides in the membrane. In terms of biological role, involved in the retrieval of endoplasmic reticulum membrane proteins from the early Golgi compartment. The chain is Protein RER1C (RER1C) from Arabidopsis thaliana (Mouse-ear cress).